Consider the following 932-residue polypeptide: Protocadherin gamma-A3 (932 aa).

An N-terminal signal peptide occupies residues 1-29 (MTNCLSFRNGRGLALLCALLGTLCETGSG). Cadherin domains follow at residues 30 to 133 (QIRY…APNF), 134 to 242 (PTEE…PPMF), 243 to 347 (TQPE…APEI), 348 to 452 (TITS…PPTF), 453 to 562 (PHLS…APEI), and 570 to 682 (DGST…EPSA). The Extracellular portion of the chain corresponds to 30–692 (QIRYSVSEEL…KPNDSDLTLY (663 aa)). N265, N419, and N545 each carry an N-linked (GlcNAc...) asparagine glycan. N-linked (GlcNAc...) asparagine glycosylation occurs at N685. Residues 693–713 (LVVAVAAVSCVFLAFVIVLLA) traverse the membrane as a helical segment. Topologically, residues 714–932 (LRLRRWHKSR…KKKSGKKEKK (219 aa)) are cytoplasmic. Disordered regions lie at residues 805 to 841 (NLLQQAPPNTDWRFSQAQRPGTSGSQNGDDTGTWPNN) and 902 to 932 (ATLTNAAGKRDGKAPAGGNGNKKKSGKKEKK). Positions 922–932 (NKKKSGKKEKK) are enriched in basic residues.

Its subcellular location is the cell membrane. Functionally, potential calcium-dependent cell-adhesion protein. May be involved in the establishment and maintenance of specific neuronal connections in the brain. The polypeptide is Protocadherin gamma-A3 (PCDHGA3) (Homo sapiens (Human)).